The primary structure comprises 420 residues: Exodeoxyribonuclease 7 large subunit (420 aa).

It belongs to the XseA family. Heterooligomer composed of large and small subunits.

Its subcellular location is the cytoplasm. The enzyme catalyses Exonucleolytic cleavage in either 5'- to 3'- or 3'- to 5'-direction to yield nucleoside 5'-phosphates.. In terms of biological role, bidirectionally degrades single-stranded DNA into large acid-insoluble oligonucleotides, which are then degraded further into small acid-soluble oligonucleotides. This chain is Exodeoxyribonuclease 7 large subunit, found in Helicobacter pylori (strain J99 / ATCC 700824) (Campylobacter pylori J99).